Consider the following 46-residue polypeptide: Protein PsbN (46 aa).

The chain crosses the membrane as a helical span at residues 10–30; sequence IAITILIVLLGLTAFGVYTAF.

This sequence belongs to the PsbN family.

The protein resides in the cellular thylakoid membrane. Functionally, may play a role in photosystem I and II biogenesis. In Prochlorococcus marinus (strain SARG / CCMP1375 / SS120), this protein is Protein PsbN.